A 325-amino-acid polypeptide reads, in one-letter code: MAQYKGTMREAGRAMHLLKKRERQREQMEVLKQRIAEETILKSQVDKRFSAHYDAVEAELKSSTVGLVTLNDMKARQEALVRERERQLAKRQHLEEQRLQQERQREQEQRRERKRKISCLSFALDDLDDQADAAEARRAGNLGKNPDVDTSFLPDRDREEEENRLREELRQEWEAQREKVKDEEMEVTFSYWDGSGHRRTVRVRKGNTVQQFLKKALQGLRKDFLELRSAGVEQLMFIKEDLILPHYHTFYDFIIARARGKSGPLFSFDVHDDVRLLSDATMEKDESHAGKVVLRSWYEKNKHIFPASRWEAYDPEKKWDKYTIR.

Ala-2 carries the post-translational modification N-acetylalanine. Disordered stretches follow at residues 92–111 (QHLE…EQRR) and 137–160 (RRAG…DREE).

The protein belongs to the FAM50 family. As to expression, widely expressed. Mostly abundant in testis and adult and fetal brain.

The sequence is that of Protein FAM50B (FAM50B) from Homo sapiens (Human).